Reading from the N-terminus, the 298-residue chain is Probable tRNA(His) guanylyltransferase (298 aa).

Mg(2+) contacts are provided by Asp58, Gly59, and Asp105. GTP is bound by residues 58-63 (DGRNFH) and 104-105 (SD).

It belongs to the tRNA(His) guanylyltransferase family. Homotetramer. Interacts with MFN1 and MFN2; functions as a guanyl-nucleotide exchange factor/GEF for MFN2 and also probably MFN1. Mg(2+) is required as a cofactor.

It localises to the cytoplasm. It is found in the mitochondrion. It carries out the reaction a 5'-end ribonucleotide-tRNA(His) + GTP + ATP + H2O = a 5'-end phospho-guanosine-ribonucleotide-tRNA(His) + AMP + 2 diphosphate + H(+). Adds a GMP to the 5'-end of tRNA(His) after transcription and RNase P cleavage. This step is essential for proper recognition of the tRNA and for the fidelity of protein synthesis. Also functions as a guanyl-nucleotide exchange factor/GEF for the MFN1 and MFN2 mitofusins thereby regulating mitochondrial fusion. By regulating both mitochondrial dynamics and bioenergetic function, it contributes to cell survival following oxidative stress. In Bos taurus (Bovine), this protein is Probable tRNA(His) guanylyltransferase (THG1L).